A 1041-amino-acid chain; its full sequence is FHIP family protein GF15501 (1041 aa).

2 disordered regions span residues 797 to 856 (RKGN…NKRR) and 907 to 987 (SNSS…SEPV). A Phosphoserine modification is found at serine 803. Positions 808 to 824 (NLQQQQALNPAQQQGQQ) are enriched in low complexity. Composition is skewed to polar residues over residues 825 to 843 (RSAY…TPTS) and 907 to 933 (SNSS…LSTQ). Positions 942–973 (SGSSSNSSMGGSSQTLSAHSNATTTHSSSTLH) are enriched in low complexity.

The protein belongs to the FHIP family.

The protein is FHIP family protein GF15501 of Drosophila ananassae (Fruit fly).